A 416-amino-acid polypeptide reads, in one-letter code: Choline/ethanolaminephosphotransferase 1 (416 aa).

The tract at residues 1–20 (MSGHRSTRKRCGDSHPESPV) is disordered. At Ser18 the chain carries Phosphoserine. The residue at position 40 (Thr40) is a Phosphothreonine. Asn86 provides a ligand contact to CDP-choline. Transmembrane regions (helical) follow at residues 89-108 (TIIG…FYCP) and 116-133 (LWAY…QSLD). Asp133 contacts Mg(2+). Residue Asn144 is glycosylated (N-linked (GlcNAc...) asparagine). CDP-choline is bound at residue Glu151. Asp154 contacts Mg(2+). Catalysis depends on His155, which acts as the Proton acceptor. 8 consecutive transmembrane segments (helical) span residues 156 to 176 (GCDS…VQLG), 180 to 199 (DWMF…AHWQ), 210 to 230 (IIDV…AVIG), 246 to 267 (MKLL…NYFR), 286 to 306 (VLSP…IYKK), 315 to 334 (HPCL…TNKL), 349 to 363 (TAFI…DQYF), and 368 to 388 (DEYI…IRYC). Asp158 contacts Mg(2+).

This sequence belongs to the CDP-alcohol phosphatidyltransferase class-I family. Homodimer. The cofactor is Mg(2+). Mn(2+) serves as cofactor.

Its subcellular location is the endoplasmic reticulum membrane. It localises to the nucleus membrane. It catalyses the reaction CDP-ethanolamine + a 1,2-diacyl-sn-glycerol = a 1,2-diacyl-sn-glycero-3-phosphoethanolamine + CMP + H(+). The enzyme catalyses CDP-choline + a 1,2-diacyl-sn-glycerol = a 1,2-diacyl-sn-glycero-3-phosphocholine + CMP + H(+). It carries out the reaction 1-O-alkyl-2-acyl-sn-glycerol + CDP-choline = a 1-O-alkyl-2-acyl-sn-glycero-3-phosphocholine + CMP + H(+). The catalysed reaction is a 1-O-(1Z-alkenyl)-2-acyl-sn-glycerol + CDP-choline = a 1-O-(1Z-alkenyl)-2-acyl-sn-glycero-3-phosphocholine + CMP + H(+). It catalyses the reaction 1,2-dioctanoyl-sn-glycerol + CDP-choline = 1,2-dioctanoyl-sn-glycero-3-phosphocholine + CMP + H(+). The enzyme catalyses 1,2-didecanoyl-sn-glycerol + CDP-choline = 1,2-didecanoyl-sn-glycero-3-phosphocholine + CMP + H(+). It carries out the reaction CDP-choline + 1,2-di-(9Z-octadecenoyl)-sn-glycerol = 1,2-di-(9Z-octadecenoyl)-sn-glycero-3-phosphocholine + CMP + H(+). The catalysed reaction is 1-hexadecanoyl-2-(9Z-octadecenoyl)-sn-glycerol + CDP-choline = 1-hexadecanoyl-2-(9Z-octadecenoyl)-sn-glycero-3-phosphocholine + CMP + H(+). It catalyses the reaction CDP-ethanolamine + 1,2-di-(9Z-octadecenoyl)-sn-glycerol = 1,2-di-(9Z-octadecenoyl)-sn-glycero-3-phosphoethanolamine + CMP + H(+). The enzyme catalyses 1-hexadecanoyl-2-(9Z-octadecenoyl)-sn-glycerol + CDP-ethanolamine = 1-hexadecanoyl-2-(9Z-octadecenoyl)-sn-glycero-3-phosphoethanolamine + CMP + H(+). It carries out the reaction 1-hexadecanoyl-2-(4Z,7Z,10Z,13Z,16Z,19Z-docosahexaenoyl)-sn-glycerol + CDP-choline = 1-hexadecanoyl-2-(4Z,7Z,10Z,13Z,16Z,19Z-docosahexaenoyl)-sn-glycero-3-phosphocholine + CMP + H(+). The catalysed reaction is 1,2-di-(9Z-hexadecenoyl)-sn-glycerol + CDP-choline = 1,2-di-(9Z-hexadecenoyl)-sn-glycero-3-phosphocholine + CMP + H(+). It catalyses the reaction 1,2-di-(9Z-hexadecenoyl)-sn-glycerol + CDP-ethanolamine = 1,2-di-(9Z-hexadecenoyl)-sn-glycero-3-phosphoethanolamine + CMP + H(+). The enzyme catalyses 1-O-hexadecyl-2-acetyl-sn-glycerol + CDP-choline = 1-O-hexadecyl-2-acetyl-sn-glycero-3-phosphocholine + CMP + H(+). It carries out the reaction 1-O-hexadecyl-2-(5Z,8Z,11Z,14Z-eicosatetraenoyl)-sn-glycerol + CDP-choline = 1-O-hexadecyl-2-(5Z,8Z,11Z,14Z)-eicosatetraenoyl-sn-glycero-3-phosphocholine + CMP + H(+). It functions in the pathway phospholipid metabolism; phosphatidylethanolamine biosynthesis; phosphatidylethanolamine from ethanolamine: step 3/3. The protein operates within phospholipid metabolism; phosphatidylcholine biosynthesis; phosphatidylcholine from phosphocholine: step 2/2. Its function is as follows. Catalyzes both phosphatidylcholine and phosphatidylethanolamine biosynthesis from CDP-choline and CDP-ethanolamine, respectively. Involved in protein-dependent process of phospholipid transport to distribute phosphatidyl choline to the lumenal surface. Has a higher cholinephosphotransferase activity than ethanolaminephosphotransferase activity. The protein is Choline/ethanolaminephosphotransferase 1 of Mus musculus (Mouse).